Consider the following 164-residue polypeptide: Cyanate hydratase (164 aa).

Active-site residues include R90, E93, and S116.

The protein belongs to the cyanase family.

It catalyses the reaction cyanate + hydrogencarbonate + 3 H(+) = NH4(+) + 2 CO2. Functionally, catalyzes the reaction of cyanate with bicarbonate to produce ammonia and carbon dioxide. This is Cyanate hydratase from Ricinus communis (Castor bean).